The following is a 592-amino-acid chain: Inactive metallocarboxypeptidase ecm14 (592 aa).

Positions 1-22 (MYRQDHVFVVLCAVLLAGQVTA) are cleaved as a signal peptide. A propeptide spanning residues 23 to 175 (VPAGTGINPH…AIYESRYPTR (153 aa)) is cleaved from the precursor. One can recognise a Peptidase M14 domain in the interval 203–524 (HYQPFNVILQ…NSVLVLGHFL (322 aa)). Residues H267 and E270 each coordinate Zn(2+). Residues 267 to 270 (HARE), R325, and 342 to 343 (DR) contribute to the substrate site. A disulfide bond links C336 and C359. N-linked (GlcNAc...) asparagine glycosylation is present at N383. H399 contributes to the Zn(2+) binding site. Substrate is bound at residue 400-401 (SY). N548 is a glycosylation site (N-linked (GlcNAc...) asparagine).

The protein belongs to the peptidase M14 family. The cofactor is Zn(2+).

The protein resides in the vacuole. The protein localises to the secreted. Its function is as follows. Inactive carboxypeptidase that may play a role in cell wall organization and biogenesis. In Talaromyces stipitatus (strain ATCC 10500 / CBS 375.48 / QM 6759 / NRRL 1006) (Penicillium stipitatum), this protein is Inactive metallocarboxypeptidase ecm14 (ecm14).